The chain runs to 226 residues: UPF0111 protein AF_1799 (226 aa).

Belongs to the UPF0111 family.

This Archaeoglobus fulgidus (strain ATCC 49558 / DSM 4304 / JCM 9628 / NBRC 100126 / VC-16) protein is UPF0111 protein AF_1799.